Reading from the N-terminus, the 598-residue chain is Aspartate--tRNA ligase (598 aa).

Glutamate 182 serves as a coordination point for L-aspartate. Residues 206–209 (QLFK) form an aspartate region. Arginine 228 serves as a coordination point for L-aspartate. ATP is bound by residues 228 to 230 (RDE) and glutamine 237. An L-aspartate-binding site is contributed by histidine 456. Glutamate 490 is an ATP binding site. Arginine 497 provides a ligand contact to L-aspartate. Residue 542–545 (GVDR) participates in ATP binding.

Belongs to the class-II aminoacyl-tRNA synthetase family. Type 1 subfamily. As to quaternary structure, homodimer.

It is found in the cytoplasm. The enzyme catalyses tRNA(Asp) + L-aspartate + ATP = L-aspartyl-tRNA(Asp) + AMP + diphosphate. Catalyzes the attachment of L-aspartate to tRNA(Asp) in a two-step reaction: L-aspartate is first activated by ATP to form Asp-AMP and then transferred to the acceptor end of tRNA(Asp). In Agathobacter rectalis (strain ATCC 33656 / DSM 3377 / JCM 17463 / KCTC 5835 / VPI 0990) (Eubacterium rectale), this protein is Aspartate--tRNA ligase.